A 473-amino-acid chain; its full sequence is Sulfate adenylyltransferase subunit 1 (473 aa).

The tr-type G domain occupies 19-238 (KTLLKFLTCG…IKIKNSISSE (220 aa)). Residues 28–35 (GSVDDGKS) are G1. A GTP-binding site is contributed by 28–35 (GSVDDGKS). The segment at 86–90 (GITID) is G2. Positions 107 to 110 (DTPG) are G3. Residues 107–111 (DTPGH) and 162–165 (NKMD) contribute to the GTP site. A G4 region spans residues 162–165 (NKMD). The interval 200-202 (SAL) is G5.

Belongs to the TRAFAC class translation factor GTPase superfamily. Classic translation factor GTPase family. CysN/NodQ subfamily. Heterodimer composed of CysD, the smaller subunit, and CysN.

It carries out the reaction sulfate + ATP + H(+) = adenosine 5'-phosphosulfate + diphosphate. The protein operates within sulfur metabolism; hydrogen sulfide biosynthesis; sulfite from sulfate: step 1/3. Functionally, with CysD forms the ATP sulfurylase (ATPS) that catalyzes the adenylation of sulfate producing adenosine 5'-phosphosulfate (APS) and diphosphate, the first enzymatic step in sulfur assimilation pathway. APS synthesis involves the formation of a high-energy phosphoric-sulfuric acid anhydride bond driven by GTP hydrolysis by CysN coupled to ATP hydrolysis by CysD. This chain is Sulfate adenylyltransferase subunit 1, found in Buchnera aphidicola subsp. Acyrthosiphon pisum (strain Tuc7).